A 175-amino-acid chain; its full sequence is MAQSQGWVKRYIKAFCKGFFVAVPVAVTFLDRVACVARVEGASMQPSLNPGGSQSSDVVLLNHWKVRNFEVHRGDIVSLVSPKNPEQKIIKRVIALEGDIVRTIGHKNRYVKVPRGHIWVEGDHHGHSFDSNSFGPVSLGLLHAHATHILWPPERWQKLESVLPPERLPVQREEE.

Residues 19-37 (FFVAVPVAVTFLDRVACVA) traverse the membrane as a helical segment. Residues Ser43 and Lys91 contribute to the active site.

Belongs to the peptidase S26 family. IMP2 subfamily. As to quaternary structure, heterodimer of 2 subunits, IMMPL1 and IMMPL2. As to expression, expressed in all tissues tested except adult liver and lung.

It is found in the mitochondrion inner membrane. In terms of biological role, catalyzes the removal of transit peptides required for the targeting of proteins from the mitochondrial matrix, across the inner membrane, into the inter-membrane space. Known to process the nuclear encoded protein DIABLO. The chain is Mitochondrial inner membrane protease subunit 2 (IMMP2L) from Homo sapiens (Human).